A 304-amino-acid chain; its full sequence is D-alanine--D-alanine ligase (304 aa).

An ATP-grasp domain is found at 103-299 (KLIWQALGLP…FADLCIEILK (197 aa)). An ATP-binding site is contributed by 129–184 (EEKLGLPMFVKPAAEGSSVGVVKVKEKGRLKSVYEELKHLQGEIIAERFIGGGEYS). Residues D253, E266, and N268 each contribute to the Mg(2+) site.

Belongs to the D-alanine--D-alanine ligase family. It depends on Mg(2+) as a cofactor. Mn(2+) serves as cofactor.

Its subcellular location is the cytoplasm. The enzyme catalyses 2 D-alanine + ATP = D-alanyl-D-alanine + ADP + phosphate + H(+). It functions in the pathway cell wall biogenesis; peptidoglycan biosynthesis. Its function is as follows. Cell wall formation. The polypeptide is D-alanine--D-alanine ligase (Neisseria gonorrhoeae (strain ATCC 700825 / FA 1090)).